The following is a 474-amino-acid chain: tRNA-2-methylthio-N(6)-dimethylallyladenosine synthase (474 aa).

The MTTase N-terminal domain occupies 3–120 (KKLHIKTWGC…LPEMINSVRG (118 aa)). [4Fe-4S] cluster contacts are provided by Cys-12, Cys-49, Cys-83, Cys-157, Cys-161, and Cys-164. The 233-residue stretch at 143–375 (RAEGPTAFVS…QERINQQAMA (233 aa)) folds into the Radical SAM core domain. One can recognise a TRAM domain in the interval 378-441 (RRMLGTTQRI…PNSLRGKVVR (64 aa)).

This sequence belongs to the methylthiotransferase family. MiaB subfamily. As to quaternary structure, monomer. [4Fe-4S] cluster serves as cofactor.

Its subcellular location is the cytoplasm. The catalysed reaction is N(6)-dimethylallyladenosine(37) in tRNA + (sulfur carrier)-SH + AH2 + 2 S-adenosyl-L-methionine = 2-methylsulfanyl-N(6)-dimethylallyladenosine(37) in tRNA + (sulfur carrier)-H + 5'-deoxyadenosine + L-methionine + A + S-adenosyl-L-homocysteine + 2 H(+). Its function is as follows. Catalyzes the methylthiolation of N6-(dimethylallyl)adenosine (i(6)A), leading to the formation of 2-methylthio-N6-(dimethylallyl)adenosine (ms(2)i(6)A) at position 37 in tRNAs that read codons beginning with uridine. The polypeptide is tRNA-2-methylthio-N(6)-dimethylallyladenosine synthase (Escherichia coli (strain UTI89 / UPEC)).